Here is an 855-residue protein sequence, read N- to C-terminus: DNA mismatch repair protein MutS (855 aa).

Residue 613–620 coordinates ATP; it reads GPNMGGKS. Residues 796 to 816 form a disordered region; that stretch reads TTSLPHEMPSQQSGKPASPMQ.

The protein belongs to the DNA mismatch repair MutS family.

Its function is as follows. This protein is involved in the repair of mismatches in DNA. It is possible that it carries out the mismatch recognition step. This protein has a weak ATPase activity. This chain is DNA mismatch repair protein MutS, found in Pseudomonas aeruginosa (strain LESB58).